Consider the following 101-residue polypeptide: Small ribosomal subunit protein bS6 (101 aa).

The protein belongs to the bacterial ribosomal protein bS6 family. Part of the 30S ribosomal subunit. Forms a tight heterodimer with protein bS18.

Its function is as follows. Located on the outer edge of the platform on the body of the 30S subunit. The sequence is that of Small ribosomal subunit protein bS6 (rpsF) from Thermus thermophilus (strain ATCC BAA-163 / DSM 7039 / HB27).